The primary structure comprises 100 residues: Small ribosomal subunit protein uS14c (100 aa).

The protein belongs to the universal ribosomal protein uS14 family. In terms of assembly, part of the 30S ribosomal subunit.

The protein resides in the plastid. It localises to the chloroplast. Binds 16S rRNA, required for the assembly of 30S particles. This is Small ribosomal subunit protein uS14c from Lepidium virginicum (Virginia pepperweed).